The following is a 434-amino-acid chain: UDP-N-acetylmuramate--L-alanine ligase (434 aa).

An ATP-binding site is contributed by 108–114 (GSHGKTT).

The protein belongs to the MurCDEF family.

Its subcellular location is the cytoplasm. It carries out the reaction UDP-N-acetyl-alpha-D-muramate + L-alanine + ATP = UDP-N-acetyl-alpha-D-muramoyl-L-alanine + ADP + phosphate + H(+). Its pathway is cell wall biogenesis; peptidoglycan biosynthesis. In terms of biological role, cell wall formation. This chain is UDP-N-acetylmuramate--L-alanine ligase, found in Geobacillus kaustophilus (strain HTA426).